A 329-amino-acid polypeptide reads, in one-letter code: Transcription factor RAX1 (329 aa).

HTH myb-type domains are found at residues 9–62 (KTKV…LNYL) and 63–117 (RPNI…RKKL). DNA-binding regions (H-T-H motif) lie at residues 38 to 62 (WISF…LNYL) and 90 to 113 (WSII…NTKL). Composition is skewed to low complexity over residues 122–131 (SDSSSSAMAS) and 144–154 (PTSPTTIPSSS). The tract at residues 122–162 (SDSSSSAMASPYLNPISQDVKRPTSPTTIPSSSYNPYAENP) is disordered.

Mostly expressed in roots. Also present in shoot tips and flower buds.

The protein localises to the nucleus. In terms of biological role, transcription activator of genes involved in the regulation of meristematic competence, such as CUC2. Positively regulates axillary meristems (AMs) formation and development, especially at early phases of vegetative growth, probably by specifying a stem cell niche for AM formation. Modulates the negative regulation mediated by gibberellic acid on the timing of developmental phase transitions. This Arabidopsis thaliana (Mouse-ear cress) protein is Transcription factor RAX1 (RAX1).